The primary structure comprises 408 residues: S-adenosylmethionine synthase (408 aa).

Residue His-16 coordinates ATP. A Mg(2+)-binding site is contributed by Asp-18. Glu-44 lines the K(+) pocket. L-methionine is bound by residues Glu-57 and Gln-100. The segment at 100–110 is flexible loop; that stretch reads QSPEINQGVSR. ATP contacts are provided by residues 177-179, Asp-257, 263-264, Ala-280, and Lys-284; these read DGK and RK. Asp-257 serves as a coordination point for L-methionine. Position 288 (Lys-288) interacts with L-methionine.

Belongs to the AdoMet synthase family. In terms of assembly, homotetramer; dimer of dimers. It depends on Mg(2+) as a cofactor. Requires K(+) as cofactor.

It is found in the cytoplasm. The enzyme catalyses L-methionine + ATP + H2O = S-adenosyl-L-methionine + phosphate + diphosphate. It participates in amino-acid biosynthesis; S-adenosyl-L-methionine biosynthesis; S-adenosyl-L-methionine from L-methionine: step 1/1. In terms of biological role, catalyzes the formation of S-adenosylmethionine (AdoMet) from methionine and ATP. The overall synthetic reaction is composed of two sequential steps, AdoMet formation and the subsequent tripolyphosphate hydrolysis which occurs prior to release of AdoMet from the enzyme. This chain is S-adenosylmethionine synthase, found in Bifidobacterium animalis subsp. lactis (strain AD011).